Reading from the N-terminus, the 107-residue chain is UPF0473 protein llmg_0152 (107 aa).

This sequence belongs to the UPF0473 family.

The polypeptide is UPF0473 protein llmg_0152 (Lactococcus lactis subsp. cremoris (strain MG1363)).